Consider the following 96-residue polypeptide: Large ribosomal subunit protein bL27 (96 aa).

A propeptide spanning residues 1-9 (MLNMNLQLL) is cleaved from the precursor.

The protein belongs to the bacterial ribosomal protein bL27 family. The N-terminus is cleaved by ribosomal processing cysteine protease Prp.

In Clostridioides difficile (strain 630) (Peptoclostridium difficile), this protein is Large ribosomal subunit protein bL27.